The following is a 239-amino-acid chain: Large ribosomal subunit protein uL2 (239 aa).

The segment at 200–239 is disordered; sequence VNHPHGGKEHHIGRPSTVSRRAPPGRKVGHIAARRTGRRK. A compositionally biased stretch (basic residues) spans 222–239; it reads PPGRKVGHIAARRTGRRK.

This sequence belongs to the universal ribosomal protein uL2 family. As to quaternary structure, part of the 50S ribosomal subunit. Forms a bridge to the 30S subunit in the 70S ribosome.

Functionally, one of the primary rRNA binding proteins. Required for association of the 30S and 50S subunits to form the 70S ribosome, for tRNA binding and peptide bond formation. It has been suggested to have peptidyltransferase activity; this is somewhat controversial. Makes several contacts with the 16S rRNA in the 70S ribosome. The protein is Large ribosomal subunit protein uL2 of Thermococcus gammatolerans (strain DSM 15229 / JCM 11827 / EJ3).